The primary structure comprises 299 residues: ATP phosphoribosyltransferase (299 aa).

The protein belongs to the ATP phosphoribosyltransferase family. Long subfamily. Requires Mg(2+) as cofactor.

The protein resides in the cytoplasm. It catalyses the reaction 1-(5-phospho-beta-D-ribosyl)-ATP + diphosphate = 5-phospho-alpha-D-ribose 1-diphosphate + ATP. The protein operates within amino-acid biosynthesis; L-histidine biosynthesis; L-histidine from 5-phospho-alpha-D-ribose 1-diphosphate: step 1/9. Its activity is regulated as follows. Feedback inhibited by histidine. In terms of biological role, catalyzes the condensation of ATP and 5-phosphoribose 1-diphosphate to form N'-(5'-phosphoribosyl)-ATP (PR-ATP). Has a crucial role in the pathway because the rate of histidine biosynthesis seems to be controlled primarily by regulation of HisG enzymatic activity. The polypeptide is ATP phosphoribosyltransferase (Actinobacillus pleuropneumoniae serotype 7 (strain AP76)).